The primary structure comprises 1264 residues: Regulator of G-protein signaling 22 (1264 aa).

A disordered region spans residues 565–587 (EEFSLSQPPKSPNKSPEVKTATQ). The span at 568 to 578 (SLSQPPKSPNK) shows a compositional bias: polar residues. RGS domains lie at 852-980 (KFSD…AARQ) and 1021-1145 (AFRK…TDEN). Residues 1142 to 1174 (TDENIMSVLERRQEYNKQKKKLAVLEDEKSGKD) adopt a coiled-coil conformation.

As to quaternary structure, interacts with GNA11, GNA12 and GNA13. As to expression, testis-specific. Expressed in Leydig cells and spermatogenic cells from the spermatogonia to spermatid stages (at protein level).

It is found in the cytoplasm. Its subcellular location is the nucleus. Inhibits signal transduction by increasing the GTPase activity of G protein alpha subunits thereby driving them into their inactive GDP-bound form. This is Regulator of G-protein signaling 22 (RGS22) from Homo sapiens (Human).